We begin with the raw amino-acid sequence, 552 residues long: MFS-type transporter atr4 (552 aa).

The interval 1-102 (MEDPKSLSAP…NIVDWDGPND (102 aa)) is disordered. Positions 16–27 (ADTTTADETPAA) are enriched in low complexity. Polar residues-rich tracts occupy residues 38–47 (KAGSESSENT) and 71–80 (LRNSSVSRSN). N73 carries an N-linked (GlcNAc...) asparagine glycan. 6 helical membrane passes run 118-138 (IFLVSSITFISPLGSSILATG), 153-173 (LGSLVVSVYLLGFAAGPLVIA), 182-202 (MPLYHICNILFAILTVGCALG), 214-234 (LQGCAGSAPLAIGGGTISDLI), 244-264 (GIYALGPTLGPIFGPVAGGFL), and 272-292 (WLMWLLLMIEGSVTLVNFVVM). N314 is a glycosylation site (N-linked (GlcNAc...) asparagine). 6 helical membrane passes run 346 to 366 (PIIFLLSLFMAMVYGYLYLLF), 385 to 405 (GLVYLGLGIGNIIGLVIFGVF), 425 to 445 (LLPMVWTSFTVPIGLFIYGWS), 452 to 472 (WIVPIIGTVFFGIGLLVTLVC), 498 to 518 (VVGATLPLAGPSMYQALGIGW), and 521 to 541 (SLLAFIALAGCPIPWVFYVYG).

The protein belongs to the major facilitator superfamily.

It localises to the cell membrane. Its function is as follows. MFS-type transporter; part of the gene cluster that mediates the biosynthesis of atranorin, a depside of polyketide origin that accumulates in the cortical or medullary layers of lichen thalli. The polypeptide is MFS-type transporter atr4 (Stereocaulon alpinum (Alpine snow lichen)).